The chain runs to 214 residues: Large ribosomal subunit protein bL25 (214 aa).

The segment at 189-214 is disordered; the sequence is IHASRKAKADEDEAAEGEEGEEGAED. The span at 198-214 shows a compositional bias: acidic residues; sequence DEDEAAEGEEGEEGAED.

The protein belongs to the bacterial ribosomal protein bL25 family. CTC subfamily. As to quaternary structure, part of the 50S ribosomal subunit; part of the 5S rRNA/L5/L18/L25 subcomplex. Contacts the 5S rRNA. Binds to the 5S rRNA independently of L5 and L18.

In terms of biological role, this is one of the proteins that binds to the 5S RNA in the ribosome where it forms part of the central protuberance. The chain is Large ribosomal subunit protein bL25 from Alkalilimnicola ehrlichii (strain ATCC BAA-1101 / DSM 17681 / MLHE-1).